We begin with the raw amino-acid sequence, 248 residues long: DNA repair protein RecO (248 aa).

Belongs to the RecO family.

Involved in DNA repair and RecF pathway recombination. This is DNA repair protein RecO from Bacillus mycoides (strain KBAB4) (Bacillus weihenstephanensis).